The primary structure comprises 296 residues: MEQFRNIGIIGRLGSSQVLDTVRRLKRFLLDRHLHVILEDTIAEVLPGHGLQTSSRKMLGEVCDMVIVVGGDGSLLGAARALAKHNIPVLGINRGSLGFLTDIRPDELEIKVAEVLDGHYLVENRFLLQAEVRRHAEAIGQGDALNDVVLHPGKSTRMIEFELYIDGQFVCSQKADGLIVATPTGSTAYALSAGGPIMHPKLDAIVIVPMYPHTLSGRPIVVDGNSELKIVVSKDMQIYPQVSCDGQNHFTCAPGDTITVSKKAQKLRLIHPLDHNYYEVCRTKLGWGSKLGGGGD.

The active-site Proton acceptor is aspartate 72. NAD(+)-binding positions include 72–73 (DG), 146–147 (ND), arginine 157, lysine 174, aspartate 176, 187–192 (TAYALS), and glutamine 247.

It belongs to the NAD kinase family. A divalent metal cation serves as cofactor.

The protein resides in the cytoplasm. It carries out the reaction NAD(+) + ATP = ADP + NADP(+) + H(+). Its function is as follows. Involved in the regulation of the intracellular balance of NAD and NADP, and is a key enzyme in the biosynthesis of NADP. Catalyzes specifically the phosphorylation on 2'-hydroxyl of the adenosine moiety of NAD to yield NADP. This chain is NAD kinase, found in Pseudomonas fluorescens (strain Pf0-1).